Here is a 187-residue protein sequence, read N- to C-terminus: Protein GrpE (187 aa).

The tract at residues 1 to 25 is disordered; the sequence is MADEQNLDNRAPEETPAAEGTSAGE.

Belongs to the GrpE family. As to quaternary structure, homodimer.

The protein localises to the cytoplasm. Its function is as follows. Participates actively in the response to hyperosmotic and heat shock by preventing the aggregation of stress-denatured proteins, in association with DnaK and GrpE. It is the nucleotide exchange factor for DnaK and may function as a thermosensor. Unfolded proteins bind initially to DnaJ; upon interaction with the DnaJ-bound protein, DnaK hydrolyzes its bound ATP, resulting in the formation of a stable complex. GrpE releases ADP from DnaK; ATP binding to DnaK triggers the release of the substrate protein, thus completing the reaction cycle. Several rounds of ATP-dependent interactions between DnaJ, DnaK and GrpE are required for fully efficient folding. This Azotobacter vinelandii (strain DJ / ATCC BAA-1303) protein is Protein GrpE.